The following is a 312-amino-acid chain: tRNA dimethylallyltransferase (312 aa).

Residue 11–18 coordinates ATP; sequence GLTATGKT. 13 to 18 contributes to the substrate binding site; the sequence is TATGKT. The interaction with substrate tRNA stretch occupies residues 36 to 39; that stretch reads DSMC.

The protein belongs to the IPP transferase family. In terms of assembly, monomer. It depends on Mg(2+) as a cofactor.

The enzyme catalyses adenosine(37) in tRNA + dimethylallyl diphosphate = N(6)-dimethylallyladenosine(37) in tRNA + diphosphate. Catalyzes the transfer of a dimethylallyl group onto the adenine at position 37 in tRNAs that read codons beginning with uridine, leading to the formation of N6-(dimethylallyl)adenosine (i(6)A). The chain is tRNA dimethylallyltransferase from Caldicellulosiruptor saccharolyticus (strain ATCC 43494 / DSM 8903 / Tp8T 6331).